The chain runs to 229 residues: NADH dehydrogenase [ubiquinone] iron-sulfur protein 8, mitochondrial (229 aa).

The N-terminal 41 residues, 1–41, are a transit peptide targeting the mitochondrion; the sequence is MAAILARKSLSALRSRQLVLAGHTIEGTNGYNRTLLGTRSF. 2 4Fe-4S ferredoxin-type domains span residues 121 to 150 and 160 to 189; these read RRYA…IEAE and TRYD…EGPN. Cysteine 130, cysteine 133, cysteine 136, cysteine 140, cysteine 169, cysteine 172, cysteine 175, and cysteine 179 together coordinate [4Fe-4S] cluster.

This sequence belongs to the complex I 23 kDa subunit family. In terms of assembly, complex I is composed of about 45 different subunits. This is a component of the iron-sulfur (IP) fragment of the enzyme. Requires [4Fe-4S] cluster as cofactor. As to expression, lowest expression found in storage tissues of tubers. Higher expression in older leaves than younger ones. Highest expression found in flowers.

It localises to the mitochondrion inner membrane. The catalysed reaction is a ubiquinone + NADH + 5 H(+)(in) = a ubiquinol + NAD(+) + 4 H(+)(out). Core subunit of the mitochondrial membrane respiratory chain NADH dehydrogenase (Complex I) that is believed to belong to the minimal assembly required for catalysis. Complex I functions in the transfer of electrons from NADH to the respiratory chain. The immediate electron acceptor for the enzyme is believed to be ubiquinone. May donate electrons to ubiquinone. This Solanum tuberosum (Potato) protein is NADH dehydrogenase [ubiquinone] iron-sulfur protein 8, mitochondrial.